Reading from the N-terminus, the 298-residue chain is Probable tRNA(His) guanylyltransferase (298 aa).

3 residues coordinate Mg(2+): Asp58, Gly59, and Asp105. Residues 58–63 (DGRNFH) and 104–105 (SD) each bind GTP.

This sequence belongs to the tRNA(His) guanylyltransferase family. Homotetramer. Interacts with MFN1 and MFN2; functions as a guanyl-nucleotide exchange factor/GEF for MFN2 and also probably MFN1. It depends on Mg(2+) as a cofactor.

It is found in the cytoplasm. The protein resides in the mitochondrion. It catalyses the reaction a 5'-end ribonucleotide-tRNA(His) + GTP + ATP + H2O = a 5'-end phospho-guanosine-ribonucleotide-tRNA(His) + AMP + 2 diphosphate + H(+). Functionally, adds a GMP to the 5'-end of tRNA(His) after transcription and RNase P cleavage. This step is essential for proper recognition of the tRNA and for the fidelity of protein synthesis. Also functions as a guanyl-nucleotide exchange factor/GEF for the MFN1 and MFN2 mitofusins thereby regulating mitochondrial fusion. By regulating both mitochondrial dynamics and bioenergetic function, it contributes to cell survival following oxidative stress. This is Probable tRNA(His) guanylyltransferase (Thg1l) from Mus musculus (Mouse).